The chain runs to 393 residues: DNA/RNA-binding protein KIN17 (393 aa).

The C2H2-type zinc finger occupies 28–50 (CQMCQKQCRDENGFKCHCMSESH). A winged helix-turn-helix (wHTH) region spans residues 51 to 160 (QRQLLLASEN…RQLELEKKKK (110 aa)). The residue at position 135 (Lys-135) is an N6,N6,N6-trimethyllysine; by METTL22; in vitro. Position 135 is an N6-methyllysine (Lys-135). Residues 147-180 (ETIRRQLELEKKKKQDLDDEEKTAKFIEEQVRRG) adopt a coiled-coil conformation. Over residues 209 to 224 (KGACSSSGATSSKSST) the composition is skewed to low complexity. A disordered region spans residues 209 to 260 (KGACSSSGATSSKSSTLGPSALKTIGSSASVKRKESSQSSTQSKEKKKKKSA). Positions 250–277 (QSKEKKKKKSALDEIMEIEEEKKRTART) form a coiled coil. The C-terminal subdomain A stretch occupies residues 284–334 (EIIVKIITKKLGEKYHKKKAIVKEVIDKYTAVVKMIDSGDKLKLDQTHLET). Residues 340 to 391 (GKRILVLNGGYRGNEGTLESINEKTFSATIVIETGPLKGRRVEGIQYEDISK) form a C-terminal subdomain B region.

It belongs to the KIN17 family. As to quaternary structure, associated with DNA polymerase alpha, RFC1 and cyclin A, in multiprotein DNA replication complexes. Also associates with replication origins at the G1/S phase boundary and throughout the S phase in vivo. In terms of assembly, (Microbial infection) Interacts with SV40 large T antigen. Ubiquitously expressed in all tissues examined, with highest levels in skeletal muscle, heart and testis. Differentially expressed in non-tumorigenic and tumorigenic cell lines. Highly expressed in proliferating epithelial keratinocyte cells in vitro (at protein level).

The protein localises to the nucleus. The protein resides in the cytoplasm. Involved in DNA replication and the cellular response to DNA damage. May participate in DNA replication factories and create a bridge between DNA replication and repair mediated by high molecular weight complexes. May play a role in illegitimate recombination and regulation of gene expression. May participate in mRNA processing. Binds, in vitro, to double-stranded DNA. Also shown to bind preferentially to curved DNA in vitro and in vivo. Binds via its C-terminal domain to RNA in vitro. This chain is DNA/RNA-binding protein KIN17, found in Homo sapiens (Human).